Reading from the N-terminus, the 606-residue chain is Kelch-like protein 41 (606 aa).

Serine 3 carries the phosphoserine modification. The BTB domain maps to 33 to 100 (IDCTLKAGDK…LYSASIDLND (68 aa)). The region spanning 135–237 (CLAILRLGLL…AEKYFKDHVE (103 aa)) is the BACK domain. Kelch repeat units follow at residues 346-398 (QVYV…EVDD), 399-447 (KIYV…SHNG), 448-495 (MIYC…IHKG), 497-542 (IVIA…SLAG), and 544-599 (LYAI…TRLN).

In terms of assembly, interacts with NRAP. Part of a complex that contains CUL3, RBX1 and KLHL41. Interacts with LASP1. Ubiquitinated by E3 ubiquitin ligase complex formed by CUL3 and RBX1 and probably targeted for proteasome-independent degradation. Quinone-induced oxidative stress increases its ubiquitination. Skeletal muscle. Localized between laterally fusing myofibrils in skeletal muscle (at protein level). Expressed at a lower level in the heart compared to skeletal muscle.

Its subcellular location is the cytoplasm. The protein localises to the cytoskeleton. The protein resides in the cell projection. It localises to the pseudopodium. It is found in the ruffle. Its subcellular location is the myofibril. The protein localises to the sarcomere. The protein resides in the m line. It localises to the sarcoplasmic reticulum membrane. It is found in the endoplasmic reticulum membrane. Functionally, involved in skeletal muscle development and differentiation. Regulates proliferation and differentiation of myoblasts and plays a role in myofibril assembly by promoting lateral fusion of adjacent thin fibrils into mature, wide myofibrils. Required for pseudopod elongation in transformed cells. This chain is Kelch-like protein 41 (Klhl41), found in Mus musculus (Mouse).